Here is a 453-residue protein sequence, read N- to C-terminus: Phosphoglucosamine mutase (453 aa).

The Phosphoserine intermediate role is filled by serine 109. Mg(2+)-binding residues include serine 109, aspartate 246, aspartate 248, and aspartate 250. Phosphoserine is present on serine 109.

It belongs to the phosphohexose mutase family. Mg(2+) serves as cofactor. Activated by phosphorylation.

It carries out the reaction alpha-D-glucosamine 1-phosphate = D-glucosamine 6-phosphate. Functionally, catalyzes the conversion of glucosamine-6-phosphate to glucosamine-1-phosphate. This is Phosphoglucosamine mutase from Leifsonia xyli subsp. xyli (strain CTCB07).